The sequence spans 341 residues: 5-formaminoimidazole-4-carboxamide-1-(beta)-D-ribofuranosyl 5'-monophosphate synthetase (341 aa).

Residues His10 and Thr77 each coordinate 5-amino-1-(5-phospho-beta-D-ribosyl)imidazole-4-carboxamide. Residues 106–317 (DREMKEKLMR…YYNLLFNETM (212 aa)) form the ATP-grasp domain. Residues 132 to 188 (EKLS…VLAY) and Glu210 each bind ATP. Asn238 is a binding site for 5-amino-1-(5-phospho-beta-D-ribosyl)imidazole-4-carboxamide. Mg(2+) contacts are provided by Glu277 and Glu290.

Belongs to the phosphohexose mutase family. Mg(2+) is required as a cofactor. Requires Mn(2+) as cofactor.

The enzyme catalyses 5-amino-1-(5-phospho-beta-D-ribosyl)imidazole-4-carboxamide + formate + ATP = 5-formamido-1-(5-phospho-D-ribosyl)imidazole-4-carboxamide + ADP + phosphate. Its pathway is purine metabolism; IMP biosynthesis via de novo pathway; 5-formamido-1-(5-phospho-D-ribosyl)imidazole-4-carboxamide from 5-amino-1-(5-phospho-D-ribosyl)imidazole-4-carboxamide (formate route): step 1/1. In terms of biological role, catalyzes the ATP- and formate-dependent formylation of 5-aminoimidazole-4-carboxamide-1-beta-d-ribofuranosyl 5'-monophosphate (AICAR) to 5-formaminoimidazole-4-carboxamide-1-beta-d-ribofuranosyl 5'-monophosphate (FAICAR) in the absence of folates. The chain is 5-formaminoimidazole-4-carboxamide-1-(beta)-D-ribofuranosyl 5'-monophosphate synthetase from Nitrosopumilus maritimus (strain SCM1).